The sequence spans 313 residues: Ribosomal RNA small subunit methyltransferase H (313 aa).

S-adenosyl-L-methionine is bound by residues 35 to 37 (GGH), aspartate 55, phenylalanine 80, aspartate 102, and glutamine 109.

This sequence belongs to the methyltransferase superfamily. RsmH family.

It localises to the cytoplasm. It carries out the reaction cytidine(1402) in 16S rRNA + S-adenosyl-L-methionine = N(4)-methylcytidine(1402) in 16S rRNA + S-adenosyl-L-homocysteine + H(+). In terms of biological role, specifically methylates the N4 position of cytidine in position 1402 (C1402) of 16S rRNA. The protein is Ribosomal RNA small subunit methyltransferase H of Shewanella baltica (strain OS223).